The primary structure comprises 373 residues: GPN-loop GTPase 1 (373 aa).

At Ala-2 the chain carries N-acetylalanine. A GTP-binding site is contributed by 29–34 (GSGKTT). A Gly-Pro-Asn (GPN)-loop; involved in dimer interface motif is present at residues 86–88 (GPN). 189–192 (NKTD) is a GTP binding site. Phosphoserine is present on residues Ser-301, Ser-312, and Ser-314. The tract at residues 304 to 373 (LDTGTATGSS…SMAQYWKKNK (70 aa)) is disordered. A Phosphothreonine modification is found at Thr-328. A compositionally biased stretch (acidic residues) spans 330–342 (DEEDEEADSDTDD). Phosphoserine is present on Ser-338. Thr-340 is modified (phosphothreonine). Residues 343 to 355 (IDHRVTEESREEP) show a composition bias toward basic and acidic residues.

This sequence belongs to the GPN-loop GTPase family. As to quaternary structure, heterodimer with GPN3. Binds to RNA polymerase II (RNAPII). Interacts directly with RNAPII subunits RPB4 and RPB7 and the CTD of RPB1. Interacts with XPA.

It localises to the cytoplasm. The protein localises to the nucleus. Its function is as follows. Small GTPase required for proper nuclear import of RNA polymerase II (RNAPII). May act at an RNAP assembly step prior to nuclear import. Forms an interface between the RNA polymerase II enzyme and chaperone/scaffolding proteins, suggesting that it is required to connect RNA polymerase II to regulators of protein complex formation. May be involved in nuclear localization of XPA. The chain is GPN-loop GTPase 1 from Bos taurus (Bovine).